A 232-amino-acid chain; its full sequence is Orotate phosphoribosyltransferase (232 aa).

5-phospho-alpha-D-ribose 1-diphosphate-binding positions include Arg107, Lys108, Lys111, His113, and 133–141 (EDLTTAGGS). Thr137 serves as a coordination point for orotate.

The protein belongs to the purine/pyrimidine phosphoribosyltransferase family. PyrE subfamily. As to quaternary structure, homodimer. Mg(2+) serves as cofactor.

The enzyme catalyses orotidine 5'-phosphate + diphosphate = orotate + 5-phospho-alpha-D-ribose 1-diphosphate. The protein operates within pyrimidine metabolism; UMP biosynthesis via de novo pathway; UMP from orotate: step 1/2. Catalyzes the transfer of a ribosyl phosphate group from 5-phosphoribose 1-diphosphate to orotate, leading to the formation of orotidine monophosphate (OMP). In Sinorhizobium medicae (strain WSM419) (Ensifer medicae), this protein is Orotate phosphoribosyltransferase.